Reading from the N-terminus, the 124-residue chain is S-adenosylmethionine decarboxylase proenzyme (124 aa).

Ser-63 serves as the catalytic Schiff-base intermediate with substrate; via pyruvic acid. Residue Ser-63 is modified to Pyruvic acid (Ser); by autocatalysis. His-68 serves as the catalytic Proton acceptor; for processing activity. The active-site Proton donor; for catalytic activity is Cys-83.

It belongs to the prokaryotic AdoMetDC family. Type 1 subfamily. In terms of assembly, heterotetramer of two alpha and two beta chains arranged as a dimer of alpha/beta heterodimers. It depends on pyruvate as a cofactor. Is synthesized initially as an inactive proenzyme. Formation of the active enzyme involves a self-maturation process in which the active site pyruvoyl group is generated from an internal serine residue via an autocatalytic post-translational modification. Two non-identical subunits are generated from the proenzyme in this reaction, and the pyruvate is formed at the N-terminus of the alpha chain, which is derived from the carboxyl end of the proenzyme. The post-translation cleavage follows an unusual pathway, termed non-hydrolytic serinolysis, in which the side chain hydroxyl group of the serine supplies its oxygen atom to form the C-terminus of the beta chain, while the remainder of the serine residue undergoes an oxidative deamination to produce ammonia and the pyruvoyl group blocking the N-terminus of the alpha chain.

It carries out the reaction S-adenosyl-L-methionine + H(+) = S-adenosyl 3-(methylsulfanyl)propylamine + CO2. It participates in amine and polyamine biosynthesis; S-adenosylmethioninamine biosynthesis; S-adenosylmethioninamine from S-adenosyl-L-methionine: step 1/1. Its function is as follows. Catalyzes the decarboxylation of S-adenosylmethionine to S-adenosylmethioninamine (dcAdoMet), the propylamine donor required for the synthesis of the polyamines spermine and spermidine from the diamine putrescine. This is S-adenosylmethionine decarboxylase proenzyme from Caldanaerobacter subterraneus subsp. tengcongensis (strain DSM 15242 / JCM 11007 / NBRC 100824 / MB4) (Thermoanaerobacter tengcongensis).